Consider the following 454-residue polypeptide: B-cell lymphoma 3 protein (454 aa).

Residues methionine 1–alanine 50 are disordered. The segment covering lysine 21–proline 31 has biased composition (low complexity). The residue at position 41 (serine 41) is a Phosphoserine. ANK repeat units follow at residues aspartate 134–arginine 163, leucine 171–alanine 200, histidine 204–leucine 235, aspartate 241–alanine 270, serine 275–alanine 304, serine 308–leucine 337, and lysine 338–serine 367. Positions glycine 360 to serine 454 are disordered. Residues proline 365 to threonine 381 show a composition bias toward polar residues. Position 374 is a phosphoserine (serine 374). Low complexity predominate over residues serine 382 to serine 404. Phosphoserine; by GSK3 is present on residues serine 402 and serine 406. The span at glutamine 405–proline 418 shows a compositional bias: pro residues. Residues leucine 432–glycine 442 are compositionally biased toward low complexity. A compositionally biased stretch (pro residues) spans arginine 443–serine 454.

Component of a complex consisting of the NF-kappa-B p52-p52 homodimer and BCL3. Component of a complex consisting of the NF-kappa-B p50-p50 homodimer and BCL3. Interacts with N4BP2, COPS5 and PIR. Interacts with CYLD. Polyubiquitinated. Ubiquitination via 'Lys-63'-linked ubiquitin chains is required for nuclear accumulation. Deubiquitinated by CYLD, which acts on 'Lys-63'-linked ubiquitin chains. Deubiquitination by CYLD prevents nuclear accumulation. Post-translationally, activated by phosphorylation.

It is found in the nucleus. Its subcellular location is the cytoplasm. The protein localises to the perinuclear region. Its function is as follows. Contributes to the regulation of transcriptional activation of NF-kappa-B target genes. In the cytoplasm, inhibits the nuclear translocation of the NF-kappa-B p50 subunit. In the nucleus, acts as transcriptional activator that promotes transcription of NF-kappa-B target genes. Contributes to the regulation of cell proliferation. The sequence is that of B-cell lymphoma 3 protein (BCL3) from Homo sapiens (Human).